A 235-amino-acid chain; its full sequence is MSKNSKAYRAAAEKVDRSNPYTPLQAAKLAKETSSTKQDATVEVAIRLGVDPRKADQMVRGTVNLPHGTGKTARVAVFAVGEKADAAVAAGADIVGSDDLIEKIQGGFLDFDAVIATPDQMAKVGRIARVLGPRGLMPNPKTGTVTPDVAKAVADIKGGKINFRVDKQANLHFVIGKASFEENKLAENYGAAIDEVLRLKPSASKGRYLKKITVSTTTGPGIPVDPSVTRNFTEA.

The interval methionine 1–threonine 22 is disordered.

Belongs to the universal ribosomal protein uL1 family. Part of the 50S ribosomal subunit.

Its function is as follows. Binds directly to 23S rRNA. The L1 stalk is quite mobile in the ribosome, and is involved in E site tRNA release. Functionally, protein L1 is also a translational repressor protein, it controls the translation of the L11 operon by binding to its mRNA. The chain is Large ribosomal subunit protein uL1 from Mycobacterium ulcerans (strain Agy99).